Consider the following 222-residue polypeptide: Peptide methionine sulfoxide reductase MsrA 2 (222 aa).

The active site involves C56.

It belongs to the MsrA Met sulfoxide reductase family.

The enzyme catalyses L-methionyl-[protein] + [thioredoxin]-disulfide + H2O = L-methionyl-(S)-S-oxide-[protein] + [thioredoxin]-dithiol. It catalyses the reaction [thioredoxin]-disulfide + L-methionine + H2O = L-methionine (S)-S-oxide + [thioredoxin]-dithiol. In terms of biological role, has an important function as a repair enzyme for proteins that have been inactivated by oxidation. Catalyzes the reversible oxidation-reduction of methionine sulfoxide in proteins to methionine. This is Peptide methionine sulfoxide reductase MsrA 2 (msrA2) from Nostoc sp. (strain PCC 7120 / SAG 25.82 / UTEX 2576).